The following is a 211-amino-acid chain: Probable septum site-determining protein MinC (211 aa).

This sequence belongs to the MinC family. Interacts with MinD and FtsZ.

Its function is as follows. Cell division inhibitor that blocks the formation of polar Z ring septums. Rapidly oscillates between the poles of the cell to destabilize FtsZ filaments that have formed before they mature into polar Z rings. Prevents FtsZ polymerization. This chain is Probable septum site-determining protein MinC, found in Clostridium acetobutylicum (strain ATCC 824 / DSM 792 / JCM 1419 / IAM 19013 / LMG 5710 / NBRC 13948 / NRRL B-527 / VKM B-1787 / 2291 / W).